The following is a 284-amino-acid chain: 2-dehydro-3-deoxyphosphooctonate aldolase (284 aa).

The protein belongs to the KdsA family.

It localises to the cytoplasm. It catalyses the reaction D-arabinose 5-phosphate + phosphoenolpyruvate + H2O = 3-deoxy-alpha-D-manno-2-octulosonate-8-phosphate + phosphate. The protein operates within carbohydrate biosynthesis; 3-deoxy-D-manno-octulosonate biosynthesis; 3-deoxy-D-manno-octulosonate from D-ribulose 5-phosphate: step 2/3. It participates in bacterial outer membrane biogenesis; lipopolysaccharide biosynthesis. This is 2-dehydro-3-deoxyphosphooctonate aldolase from Haemophilus influenzae (strain PittEE).